A 352-amino-acid chain; its full sequence is Photosystem II D2 protein (352 aa).

Thr2 bears the N-acetylthreonine mark. Thr2 carries the phosphothreonine modification. The chain crosses the membrane as a helical span at residues 40 to 60 (CAYFALGGWLTGTTFVSSWYT). A chlorophyll a-binding site is contributed by His117. A helical transmembrane segment spans residues 124–140 (GFMLRQFEIARAVQIRP). Residues Gln129 and Asn142 each contribute to the pheophytin a site. The chain crosses the membrane as a helical span at residues 152–165 (VFVSVFLIYPLGQS). His197 contributes to the chlorophyll a binding site. Residues 207–227 (AALLCAIHGATVENTLFEDGD) traverse the membrane as a helical segment. His214 and Phe261 together coordinate a plastoquinone. His214 is a binding site for Fe cation. Fe cation is bound at residue His268. The helical transmembrane segment at 278-294 (GLWMSALGVVGLALNLR) threads the bilayer.

The protein belongs to the reaction center PufL/M/PsbA/D family. PSII is composed of 1 copy each of membrane proteins PsbA, PsbB, PsbC, PsbD, PsbE, PsbF, PsbH, PsbI, PsbJ, PsbK, PsbL, PsbM, PsbT, PsbX, PsbY, PsbZ, Psb30/Ycf12, at least 3 peripheral proteins of the oxygen-evolving complex and a large number of cofactors. It forms dimeric complexes. Requires The D1/D2 heterodimer binds P680, chlorophylls that are the primary electron donor of PSII, and subsequent electron acceptors. It shares a non-heme iron and each subunit binds pheophytin, quinone, additional chlorophylls, carotenoids and lipids. There is also a Cl(-1) ion associated with D1 and D2, which is required for oxygen evolution. The PSII complex binds additional chlorophylls, carotenoids and specific lipids. as cofactor.

Its subcellular location is the plastid. The protein resides in the chloroplast thylakoid membrane. It catalyses the reaction 2 a plastoquinone + 4 hnu + 2 H2O = 2 a plastoquinol + O2. Its function is as follows. Photosystem II (PSII) is a light-driven water:plastoquinone oxidoreductase that uses light energy to abstract electrons from H(2)O, generating O(2) and a proton gradient subsequently used for ATP formation. It consists of a core antenna complex that captures photons, and an electron transfer chain that converts photonic excitation into a charge separation. The D1/D2 (PsbA/PsbD) reaction center heterodimer binds P680, the primary electron donor of PSII as well as several subsequent electron acceptors. D2 is needed for assembly of a stable PSII complex. The protein is Photosystem II D2 protein of Ostreococcus tauri.